We begin with the raw amino-acid sequence, 72 residues long: Crustacean hyperglycemic hormone A (72 aa).

Gln1 carries the pyrrolidone carboxylic acid modification. A D-phenylalanine; in form CHHA-II modification is found at Phe3. Disulfide bonds link Cys7-Cys43, Cys23-Cys39, and Cys26-Cys52. Val72 is subject to Valine amide.

In terms of processing, stereoinversion of L-Phe (in CHHA-I) to D-Phe (in CHHA-II).

Its subcellular location is the secreted. Functionally, hormone found in the sinus gland of isopods and decapods which controls the blood sugar level. Has a secretagogue action over the amylase released from the midgut gland. May act as a stress hormone and may be involved in the control of molting and reproduction. The polypeptide is Crustacean hyperglycemic hormone A (Cherax destructor (Common yabby crayfish)).